The primary structure comprises 175 residues: Large ribosomal subunit protein uL10 (175 aa).

It belongs to the universal ribosomal protein uL10 family. Part of the ribosomal stalk of the 50S ribosomal subunit. The N-terminus interacts with L11 and the large rRNA to form the base of the stalk. The C-terminus forms an elongated spine to which L12 dimers bind in a sequential fashion forming a multimeric L10(L12)X complex.

Functionally, forms part of the ribosomal stalk, playing a central role in the interaction of the ribosome with GTP-bound translation factors. This is Large ribosomal subunit protein uL10 from Halorhodospira halophila (strain DSM 244 / SL1) (Ectothiorhodospira halophila (strain DSM 244 / SL1)).